We begin with the raw amino-acid sequence, 497 residues long: Probable cytosol aminopeptidase (497 aa).

Mn(2+) contacts are provided by Lys-263 and Asp-268. Lys-275 is an active-site residue. Mn(2+) contacts are provided by Asp-286, Asp-345, and Glu-347. Residue Arg-349 is part of the active site.

It belongs to the peptidase M17 family. Mn(2+) is required as a cofactor.

The protein resides in the cytoplasm. It catalyses the reaction Release of an N-terminal amino acid, Xaa-|-Yaa-, in which Xaa is preferably Leu, but may be other amino acids including Pro although not Arg or Lys, and Yaa may be Pro. Amino acid amides and methyl esters are also readily hydrolyzed, but rates on arylamides are exceedingly low.. The catalysed reaction is Release of an N-terminal amino acid, preferentially leucine, but not glutamic or aspartic acids.. Functionally, presumably involved in the processing and regular turnover of intracellular proteins. Catalyzes the removal of unsubstituted N-terminal amino acids from various peptides. In Agrobacterium fabrum (strain C58 / ATCC 33970) (Agrobacterium tumefaciens (strain C58)), this protein is Probable cytosol aminopeptidase.